Reading from the N-terminus, the 97-residue chain is Co-chaperonin GroES (97 aa).

This sequence belongs to the GroES chaperonin family. Heptamer of 7 subunits arranged in a ring. Interacts with the chaperonin GroEL.

Its subcellular location is the cytoplasm. In terms of biological role, together with the chaperonin GroEL, plays an essential role in assisting protein folding. The GroEL-GroES system forms a nano-cage that allows encapsulation of the non-native substrate proteins and provides a physical environment optimized to promote and accelerate protein folding. GroES binds to the apical surface of the GroEL ring, thereby capping the opening of the GroEL channel. The sequence is that of Co-chaperonin GroES from Pseudarthrobacter chlorophenolicus (strain ATCC 700700 / DSM 12829 / CIP 107037 / JCM 12360 / KCTC 9906 / NCIMB 13794 / A6) (Arthrobacter chlorophenolicus).